Reading from the N-terminus, the 954-residue chain is Valine--tRNA ligase (954 aa).

The 'HIGH' region signature appears at 48–58 (PNVTGSLHMGH). A 'KMSKS' region motif is present at residues 560-564 (KMSKS). Lysine 563 lines the ATP pocket. Residues 883 to 954 (AGFINKEAEL…QTQYQAIENL (72 aa)) are a coiled coil.

The protein belongs to the class-I aminoacyl-tRNA synthetase family. ValS type 1 subfamily. As to quaternary structure, monomer.

The protein resides in the cytoplasm. The enzyme catalyses tRNA(Val) + L-valine + ATP = L-valyl-tRNA(Val) + AMP + diphosphate. Its function is as follows. Catalyzes the attachment of valine to tRNA(Val). As ValRS can inadvertently accommodate and process structurally similar amino acids such as threonine, to avoid such errors, it has a 'posttransfer' editing activity that hydrolyzes mischarged Thr-tRNA(Val) in a tRNA-dependent manner. The protein is Valine--tRNA ligase of Actinobacillus pleuropneumoniae serotype 5b (strain L20).